Here is a 528-residue protein sequence, read N- to C-terminus: Tyrosine--tRNA ligase, cytoplasmic (528 aa).

Position 1 is an N-acetylmethionine (methionine 1). Glycine 2 carries the post-translational modification N-acetylglycine; in Tyrosine--tRNA ligase, cytoplasmic, N-terminally processed. Position 39 (tyrosine 39) interacts with L-tyrosine. Residue tyrosine 39 coordinates trans-resveratrol. The 'HIGH' region signature appears at 44–52; sequence TTGKPHVAY. The L-tyrosine site is built by tyrosine 166, glutamine 170, aspartate 173, and glutamine 188. 2 residues coordinate trans-resveratrol: glutamine 170 and aspartate 173. At lysine 197 the chain carries N6-acetyllysine. Serine 205 carries the post-translational modification Phosphoserine. Position 206 is an N6-acetyllysine (lysine 206). Positions 222–226 match the 'KMSKS' region motif; it reads KMSSS. The Nuclear localization signal signature appears at 242–247; sequence KKKLKK. The tract at residues 339–363 is disordered; sequence AAYPDPSKQKPPAKGPAKNSEPEEV. Residues 364–468 enclose the tRNA-binding domain; that stretch reads IPSRLDIRVG…AGSAPGERVF (105 aa). At serine 386 the chain carries Phosphoserine. 3 positions are modified to N6-acetyllysine: lysine 474, lysine 482, and lysine 490.

This sequence belongs to the class-I aminoacyl-tRNA synthetase family. As to quaternary structure, homodimer. Interacts (when binding to resveratrol) with PARP1; interaction stimulates the poly-ADP-ribosyltransferase activity of PARP1.

The protein resides in the cytoplasm. The protein localises to the nucleus. The catalysed reaction is tRNA(Tyr) + L-tyrosine + ATP = L-tyrosyl-tRNA(Tyr) + AMP + diphosphate + H(+). Resveratrol strongly inhibits the tyrosine--tRNA ligase activity. In terms of biological role, tyrosine--tRNA ligase that catalyzes the attachment of tyrosine to tRNA(Tyr) in a two-step reaction: tyrosine is first activated by ATP to form Tyr-AMP and then transferred to the acceptor end of tRNA(Tyr). Also acts as a positive regulator of poly-ADP-ribosylation in the nucleus, independently of its tyrosine--tRNA ligase activity. Activity is switched upon resveratrol-binding: resveratrol strongly inhibits the tyrosine--tRNA ligase activity and promotes relocalization to the nucleus, where YARS1 specifically stimulates the poly-ADP-ribosyltransferase activity of PARP1. The protein is Tyrosine--tRNA ligase, cytoplasmic (Yars1) of Mus musculus (Mouse).